A 551-amino-acid polypeptide reads, in one-letter code: Periplasmic [NiFe] hydrogenase large subunit (551 aa).

The Ni(2+) site is built by cysteine 65, cysteine 68, cysteine 530, and cysteine 533. Residues 537–551 (VIDPESNQVHKFRIL) constitute a propeptide that is removed on maturation.

Belongs to the [NiFe]/[NiFeSe] hydrogenase large subunit family. In terms of assembly, heterodimer of a large and a small subunit. It depends on Ni(2+) as a cofactor.

Its subcellular location is the periplasm. The catalysed reaction is 2 Fe(III)-[cytochrome c3] + H2 = 2 Fe(II)-[cytochrome c3] + 2 H(+). This is Periplasmic [NiFe] hydrogenase large subunit (hydB) from Megalodesulfovibrio gigas (Desulfovibrio gigas).